A 415-amino-acid polypeptide reads, in one-letter code: Serine hydroxymethyltransferase (415 aa).

(6S)-5,6,7,8-tetrahydrofolate-binding positions include Leu121 and 125–127; that span reads GHL. Lys230 bears the N6-(pyridoxal phosphate)lysine mark. 355-357 contacts (6S)-5,6,7,8-tetrahydrofolate; it reads SPF.

The protein belongs to the SHMT family. In terms of assembly, homodimer. It depends on pyridoxal 5'-phosphate as a cofactor.

The protein localises to the cytoplasm. It carries out the reaction (6R)-5,10-methylene-5,6,7,8-tetrahydrofolate + glycine + H2O = (6S)-5,6,7,8-tetrahydrofolate + L-serine. Its pathway is one-carbon metabolism; tetrahydrofolate interconversion. The protein operates within amino-acid biosynthesis; glycine biosynthesis; glycine from L-serine: step 1/1. Functionally, catalyzes the reversible interconversion of serine and glycine with tetrahydrofolate (THF) serving as the one-carbon carrier. This reaction serves as the major source of one-carbon groups required for the biosynthesis of purines, thymidylate, methionine, and other important biomolecules. Also exhibits THF-independent aldolase activity toward beta-hydroxyamino acids, producing glycine and aldehydes, via a retro-aldol mechanism. This is Serine hydroxymethyltransferase from Lactococcus lactis subsp. lactis (strain IL1403) (Streptococcus lactis).